Consider the following 319-residue polypeptide: Annexin A5 (319 aa).

Alanine 2 carries the post-translational modification N-acetylalanine. 4 Annexin repeats span residues 13 to 84 (FDGR…ALMK), 85 to 156 (PSRL…VLLQ), 168 to 240 (AQVE…AVVK), and 244 to 315 (SIPA…LLCG). Lysine 27 participates in a covalent cross-link: Glycyl lysine isopeptide (Lys-Gly) (interchain with G-Cter in SUMO1); alternate. Residue lysine 27 forms a Glycyl lysine isopeptide (Lys-Gly) (interchain with G-Cter in SUMO2); alternate linkage. Position 35 is a phosphoserine (serine 35). Lysine 68, lysine 74, lysine 77, lysine 95, and lysine 99 each carry N6-acetyllysine. Position 288 is an N6-succinyllysine (lysine 288). Positions 312 to 318 (LLCGGED) match the [IL]-x-C-x-x-[DE] motif motif.

Belongs to the annexin family. In terms of assembly, monomer. Binds ATRX, EIF5B and DNMT1. In terms of processing, S-nitrosylation is induced by interferon-gamma and oxidatively-modified low-densitity lipoprotein (LDL(ox)) possibly implicating the iNOS-S100A8/9 transnitrosylase complex.

This protein is an anticoagulant protein that acts as an indirect inhibitor of the thromboplastin-specific complex, which is involved in the blood coagulation cascade. This is Annexin A5 (Anxa5) from Rattus norvegicus (Rat).